A 310-amino-acid chain; its full sequence is HPr kinase/phosphorylase (310 aa).

Catalysis depends on residues H138 and K159. Residue 153-160 (GDSGIGKS) coordinates ATP. S160 is a Mg(2+) binding site. The active-site Proton acceptor; for phosphorylation activity. Proton donor; for dephosphorylation activity is the D177. The tract at residues 201-210 (LEIRGVGIID) is important for the catalytic mechanism of both phosphorylation and dephosphorylation. E202 is a binding site for Mg(2+). R243 is a catalytic residue. Residues 264–269 (PVQTGR) form an important for the catalytic mechanism of dephosphorylation region.

It belongs to the HPrK/P family. As to quaternary structure, homohexamer. Mg(2+) is required as a cofactor. The cofactor is Mn(2+).

The catalysed reaction is [HPr protein]-L-serine + ATP = [HPr protein]-O-phospho-L-serine + ADP + H(+). It catalyses the reaction [HPr protein]-O-phospho-L-serine + phosphate + H(+) = [HPr protein]-L-serine + diphosphate. With respect to regulation, kinase activity is inhibited by inorganic phosphate (Pi). In contrast to many other bacteria, neither kinase activity nor phosphorylase activity is affected by fructose 1,6-bisphosphate (FBP). Catalyzes the ATP- as well as probably the pyrophosphate-dependent phosphorylation of 'Ser-46' in HPr, a phosphocarrier protein of the phosphoenolpyruvate-dependent sugar phosphotransferase system (PTS). HprK/P also catalyzes the pyrophosphate-producing, inorganic phosphate-dependent dephosphorylation (phosphorolysis) of seryl-phosphorylated HPr (P-Ser-HPr). The two antagonistic activities of HprK/P are regulated by several intracellular metabolites, which change their concentration in response to the absence or presence of rapidly metabolisable carbon sources (glucose, fructose, etc.) in the growth medium. Therefore, by controlling the phosphorylation state of HPr, the HPrK/P is a sensor enzyme that plays a major role in the regulation of carbon metabolism and sugar transport: it probably mediates carbon catabolite repression (CCR), and regulates PTS-catalyzed carbohydrate uptake and inducer exclusion. The polypeptide is HPr kinase/phosphorylase (hprK) (Streptococcus equinus (Streptococcus bovis)).